A 158-amino-acid polypeptide reads, in one-letter code: S-ribosylhomocysteine lyase (158 aa).

Residues His-54, His-58, and Cys-124 each coordinate Fe cation.

Belongs to the LuxS family. Homodimer. Fe cation is required as a cofactor.

The catalysed reaction is S-(5-deoxy-D-ribos-5-yl)-L-homocysteine = (S)-4,5-dihydroxypentane-2,3-dione + L-homocysteine. In terms of biological role, involved in the synthesis of autoinducer 2 (AI-2) which is secreted by bacteria and is used to communicate both the cell density and the metabolic potential of the environment. The regulation of gene expression in response to changes in cell density is called quorum sensing. Catalyzes the transformation of S-ribosylhomocysteine (RHC) to homocysteine (HC) and 4,5-dihydroxy-2,3-pentadione (DPD). This chain is S-ribosylhomocysteine lyase, found in Lactobacillus gasseri (strain ATCC 33323 / DSM 20243 / BCRC 14619 / CIP 102991 / JCM 1131 / KCTC 3163 / NCIMB 11718 / NCTC 13722 / AM63).